The sequence spans 154 residues: Large ribosomal subunit protein uL22 (154 aa).

It belongs to the universal ribosomal protein uL22 family. As to quaternary structure, part of the 50S ribosomal subunit.

This protein binds specifically to 23S rRNA. It makes multiple contacts with different domains of the 23S rRNA in the assembled 50S subunit and ribosome. Functionally, the globular domain of the protein is located near the polypeptide exit tunnel on the outside of the subunit, while an extended beta-hairpin is found that lines the wall of the exit tunnel in the center of the 70S ribosome. The protein is Large ribosomal subunit protein uL22 of Methanosphaera stadtmanae (strain ATCC 43021 / DSM 3091 / JCM 11832 / MCB-3).